A 282-amino-acid polypeptide reads, in one-letter code: Bifunctional protein FolD (282 aa).

NADP(+)-binding positions include 165–167, serine 190, and isoleucine 231; that span reads NRS.

This sequence belongs to the tetrahydrofolate dehydrogenase/cyclohydrolase family. Homodimer.

The catalysed reaction is (6R)-5,10-methylene-5,6,7,8-tetrahydrofolate + NADP(+) = (6R)-5,10-methenyltetrahydrofolate + NADPH. The enzyme catalyses (6R)-5,10-methenyltetrahydrofolate + H2O = (6R)-10-formyltetrahydrofolate + H(+). Its pathway is one-carbon metabolism; tetrahydrofolate interconversion. In terms of biological role, catalyzes the oxidation of 5,10-methylenetetrahydrofolate to 5,10-methenyltetrahydrofolate and then the hydrolysis of 5,10-methenyltetrahydrofolate to 10-formyltetrahydrofolate. The polypeptide is Bifunctional protein FolD (Clostridium botulinum (strain Langeland / NCTC 10281 / Type F)).